A 671-amino-acid chain; its full sequence is DNA ligase (671 aa).

Residues Asp32–Asp36, Ser81–Leu82, and Glu113 contribute to the NAD(+) site. Lys115 functions as the N6-AMP-lysine intermediate in the catalytic mechanism. NAD(+)-binding residues include Arg136, Glu173, Lys290, and Lys314. Residues Cys408, Cys411, Cys426, and Cys432 each coordinate Zn(2+). The BRCT domain occupies Glu593–Glu671.

Belongs to the NAD-dependent DNA ligase family. LigA subfamily. Mg(2+) is required as a cofactor. It depends on Mn(2+) as a cofactor.

The enzyme catalyses NAD(+) + (deoxyribonucleotide)n-3'-hydroxyl + 5'-phospho-(deoxyribonucleotide)m = (deoxyribonucleotide)n+m + AMP + beta-nicotinamide D-nucleotide.. In terms of biological role, DNA ligase that catalyzes the formation of phosphodiester linkages between 5'-phosphoryl and 3'-hydroxyl groups in double-stranded DNA using NAD as a coenzyme and as the energy source for the reaction. It is essential for DNA replication and repair of damaged DNA. The polypeptide is DNA ligase (Enterobacter sp. (strain 638)).